Here is a 291-residue protein sequence, read N- to C-terminus: E3 ubiquitin-protein ligase RZFP34 (291 aa).

The CHY-type zinc-finger motif lies at 20–96 (IGSGHYGCSH…VQQNCSNCGV (77 aa)). Zn(2+) contacts are provided by C27, H29, C40, C41, C47, C50, H51, H66, C78, C81, C91, C94, C103, C106, H119, C120, C123, C126, H136, C137, C140, C143, H152, and C154. The CTCHY-type zinc finger occupies 98 to 162 (MGKYFCSKCK…QCVEGAMHHN (65 aa)). Residues 163-206 (CPVCFEYLFDSTRDITVLRCGHTMHLECTKDMGLHNRYTCPVCS) form an RING-type; atypical zinc finger. A Phosphoserine modification is found at S173. T178 carries the phosphothreonine modification. Phosphoserine is present on S208. A disordered region spans residues 271 to 291 (QRGSDSHSCSSGMPQVVGSTG).

As to quaternary structure, interacts with SRK2D/2SNRK2.2, SRK2I/SNRK2.3 and SRK2E/SNRK2.6. Phosphorylated at Ser-173, Thr-178 and Ser-208 by SRK2E/SNRK2.6 in response to abscisic acid (ABA). Phosphorylation activates its E3 ubiquitin-protein ligase activity. As to expression, expressed in roots, leaves, and anthers and stigma of open flowers.

It localises to the nucleus. It is found in the cytoplasm. Its subcellular location is the endoplasmic reticulum. It catalyses the reaction S-ubiquitinyl-[E2 ubiquitin-conjugating enzyme]-L-cysteine + [acceptor protein]-L-lysine = [E2 ubiquitin-conjugating enzyme]-L-cysteine + N(6)-ubiquitinyl-[acceptor protein]-L-lysine.. It participates in protein modification; protein ubiquitination. In terms of biological role, possesses E3 ubiquitin-protein ligase activity in vitro. Mediates mainly 'Lys-48'-linked polyubiquitination. Promotes abscisic acid (ABA)-induced stomatal closure, reactive oxygen species (ROS) production and drought tolerance. Involved in the regulation of stomatal aperture. The chain is E3 ubiquitin-protein ligase RZFP34 from Arabidopsis thaliana (Mouse-ear cress).